Reading from the N-terminus, the 343-residue chain is L-idonate 5-dehydrogenase (NAD(P)(+)) (343 aa).

Zn(2+)-binding residues include Cys-40, His-65, Cys-93, Cys-96, Cys-99, Cys-107, and Glu-153.

It belongs to the zinc-containing alcohol dehydrogenase family. Requires Zn(2+) as cofactor.

It carries out the reaction L-idonate + NADP(+) = 5-dehydro-D-gluconate + NADPH + H(+). The catalysed reaction is L-idonate + NAD(+) = 5-dehydro-D-gluconate + NADH + H(+). Its pathway is carbohydrate acid metabolism; L-idonate degradation. In terms of biological role, catalyzes the NADH/NADPH-dependent oxidation of L-idonate to 5-ketogluconate (5KG). This is L-idonate 5-dehydrogenase (NAD(P)(+)) (idnD) from Escherichia coli (strain K12).